Reading from the N-terminus, the 360-residue chain is Phospho-N-acetylmuramoyl-pentapeptide-transferase (360 aa).

A run of 10 helical transmembrane segments spans residues 25–45 (RGILGVLTALSLALWLGPWMI), 73–93 (TMGGALILSAIAISTLLWADL), 97–117 (YVWVVLIVTLAFGAIGWVDDY), 134–154 (YFWQSVFGLAAAIFLYKTAPT), 168–188 (LAIPLGAGFIVLTYFVIVGSS), 199–219 (GLAIMPTVMVGGALGIFCYLS), 236–256 (AGELIVFCGALIGAGLGFLWF), 263–283 (VFMGDVGALALGAALGTIAVI), 288–308 (VVLFIMGGVFVMETLSVVIQV), and 338–358 (VIVRFWIITVILVLIGLATLK).

It belongs to the glycosyltransferase 4 family. MraY subfamily. Mg(2+) is required as a cofactor.

The protein resides in the cell inner membrane. It catalyses the reaction UDP-N-acetyl-alpha-D-muramoyl-L-alanyl-gamma-D-glutamyl-meso-2,6-diaminopimeloyl-D-alanyl-D-alanine + di-trans,octa-cis-undecaprenyl phosphate = di-trans,octa-cis-undecaprenyl diphospho-N-acetyl-alpha-D-muramoyl-L-alanyl-D-glutamyl-meso-2,6-diaminopimeloyl-D-alanyl-D-alanine + UMP. Its pathway is cell wall biogenesis; peptidoglycan biosynthesis. In terms of biological role, catalyzes the initial step of the lipid cycle reactions in the biosynthesis of the cell wall peptidoglycan: transfers peptidoglycan precursor phospho-MurNAc-pentapeptide from UDP-MurNAc-pentapeptide onto the lipid carrier undecaprenyl phosphate, yielding undecaprenyl-pyrophosphoryl-MurNAc-pentapeptide, known as lipid I. This Pseudomonas entomophila (strain L48) protein is Phospho-N-acetylmuramoyl-pentapeptide-transferase.